A 152-amino-acid polypeptide reads, in one-letter code: Aspartate carbamoyltransferase regulatory chain (152 aa).

The Zn(2+) site is built by Cys108, Cys113, Cys137, and Cys140.

Belongs to the PyrI family. In terms of assembly, contains catalytic and regulatory chains. Zn(2+) is required as a cofactor.

In terms of biological role, involved in allosteric regulation of aspartate carbamoyltransferase. This chain is Aspartate carbamoyltransferase regulatory chain, found in Neisseria meningitidis serogroup A / serotype 4A (strain DSM 15465 / Z2491).